The sequence spans 358 residues: C-C chemokine receptor type 3 (358 aa).

Residues 1 to 43 (MATYPEEAELETEFPGTTFYDYEFAQPCFKVSITDLGAQFLPS) are Extracellular-facing. The helical transmembrane segment at 44 to 64 (LFSLVFIVGLLGNITVIVVLT) threads the bilayer. The Cytoplasmic segment spans residues 65 to 74 (KYQKLKIMTN). Residues 75–95 (IYLLNLAISDLLFLFTLPFWT) form a helical membrane-spanning segment. Residues 96–112 (YYVHWNKWVFGHFMCKI) are Extracellular-facing. The chain crosses the membrane as a helical span at residues 113–133 (ISGLYYVGLFSEIFFIILLTI). Topologically, residues 134–154 (DRYLAIVHAVFALRTRTVTFG) are cytoplasmic. Residues 155 to 175 (IITSVITWVLAVLAALPEFMF) traverse the membrane as a helical segment. The Extracellular portion of the chain corresponds to 176–206 (YGTQGHFEVLFCGPSYPEKKEHHWKRFQALR). The helical transmembrane segment at 207–227 (MNIFGLALPLLIMIICYTGII) threads the bilayer. Topologically, residues 228–243 (KTLLRCPSKKKYKAIR) are cytoplasmic. Residues 244 to 264 (LIFVIMVVFFVFWTPYNLLLL) form a helical membrane-spanning segment. Topologically, residues 265 to 287 (FSAFDLSFLDDCERSKQLDMAKH) are extracellular. A helical membrane pass occupies residues 288 to 308 (VTEVIAHTHCCINPIIYAFVG). Over 309–358 (ERFQKYLRHFLHRNVTMHLSKYIPFFTSEKLERSSSISPSSGDPELSVVF) the chain is Cytoplasmic.

This sequence belongs to the G-protein coupled receptor 1 family.

Its subcellular location is the cell membrane. Its function is as follows. Receptor for C-C type chemokine. Binds and responds to a variety of chemokines, including CCL11, CCL26, CCL7, CCL13, RANTES(CCL5) and CCL15. Subsequently transduces a signal by increasing the intracellular calcium ions level. In addition acts as a possible functional receptor for NARS1. This chain is C-C chemokine receptor type 3 (CCR3), found in Cavia porcellus (Guinea pig).